The following is a 114-amino-acid chain: Ribosome-binding factor A (114 aa).

Belongs to the RbfA family. As to quaternary structure, monomer. Binds 30S ribosomal subunits, but not 50S ribosomal subunits or 70S ribosomes.

Its subcellular location is the cytoplasm. In terms of biological role, one of several proteins that assist in the late maturation steps of the functional core of the 30S ribosomal subunit. Associates with free 30S ribosomal subunits (but not with 30S subunits that are part of 70S ribosomes or polysomes). Required for efficient processing of 16S rRNA. May interact with the 5'-terminal helix region of 16S rRNA. The sequence is that of Ribosome-binding factor A from Listeria innocua serovar 6a (strain ATCC BAA-680 / CLIP 11262).